The primary structure comprises 60 residues: Cytochrome c oxidase subunit 9, mitochondrial (60 aa).

At 1–15 (MSAIAPITGTIRKRI) the chain is on the mitochondrial matrix side. The helical transmembrane segment at 16–38 (LADITIGFAIGGAMASYWWWGFH) threads the bilayer. The Mitochondrial intermembrane portion of the chain corresponds to 39–57 (KNIINKREAYYAKLAEQKA). Positions 58 to 60 (AEN) are cleaved as a propeptide — removed in mature form.

Belongs to the fungal cytochrome c oxidase subunit 7a family. As to quaternary structure, component of the cytochrome c oxidase (complex IV, CIV), a multisubunit enzyme composed of a catalytic core of 3 subunits and several supernumerary subunits. The complex exists as a monomer or a dimer and forms supercomplexes (SCs) in the inner mitochondrial membrane with ubiquinol-cytochrome c oxidoreductase (cytochrome b-c1 complex, complex III, CIII).

It localises to the mitochondrion inner membrane. The protein operates within energy metabolism; oxidative phosphorylation. Component of the cytochrome c oxidase, the last enzyme in the mitochondrial electron transport chain which drives oxidative phosphorylation. The respiratory chain contains 3 multisubunit complexes succinate dehydrogenase (complex II, CII), ubiquinol-cytochrome c oxidoreductase (cytochrome b-c1 complex, complex III, CIII) and cytochrome c oxidase (complex IV, CIV), that cooperate to transfer electrons derived from NADH and succinate to molecular oxygen, creating an electrochemical gradient over the inner membrane that drives transmembrane transport and the ATP synthase. Cytochrome c oxidase is the component of the respiratory chain that catalyzes the reduction of oxygen to water. Electrons originating from reduced cytochrome c in the intermembrane space (IMS) are transferred via the dinuclear copper A center (CU(A)) of subunit 2 and heme A of subunit 1 to the active site in subunit 1, a binuclear center (BNC) formed by heme A3 and copper B (CU(B)). The BNC reduces molecular oxygen to 2 water molecules using 4 electrons from cytochrome c in the IMS and 4 protons from the mitochondrial matrix. The polypeptide is Cytochrome c oxidase subunit 9, mitochondrial (COX9) (Kluyveromyces lactis (strain ATCC 8585 / CBS 2359 / DSM 70799 / NBRC 1267 / NRRL Y-1140 / WM37) (Yeast)).